The sequence spans 21 residues: Nigrocin-2HSa (21 aa).

Cysteine 15 and cysteine 21 are oxidised to a cystine.

In terms of tissue distribution, expressed by the skin glands.

The protein localises to the secreted. Its function is as follows. Has antibacterial activity against the Gram-positive bacterium S.aureus ATCC 25923 (MIC=56 uM) and the Gram-negative bacterium E.coli ATCC 25726 (MIC=28 uM). This chain is Nigrocin-2HSa, found in Odorrana hosii (Hose's rock frog).